Consider the following 1092-residue polypeptide: DNA polymerase delta catalytic subunit (1092 aa).

The interval 1 to 71 (MDGKRKFNGT…SRPPPPELDP (71 aa)) is disordered. The short motif at 4–19 (KRKFNGTSNGHAKKPR) is the Nuclear localization signal element. Zn(2+) is bound by residues C997, C1000, C1014, and C1017. The CysA-type zinc finger occupies 997–1017 (CLGCKSLMPKGYEQACLCPHC). Residues C1046, C1049, C1059, and C1064 each coordinate [4Fe-4S] cluster. A CysB motif motif is present at residues 1046–1064 (CQRCQESLHEEVICSNRDC).

This sequence belongs to the DNA polymerase type-B family. Catalytic component of the DNA polymerase delta complex consisting of three subunits: the catalytic subunit PolD1 and two accessory subunits PolD2/Pol31 and PolD3/Pol32. Within the delta complex, interacts with both PolD2 and PolD3, and is able to interact with PolD2 in the absence of PolD3. Interacts with PCNA and PCNA2. The cofactor is [4Fe-4S] cluster. Requires Mg(2+) as cofactor. As to expression, expressed in ovaries (at the protein level). Expressed in embryos (at the protein level).

It localises to the nucleus. The protein resides in the nucleoplasm. The enzyme catalyses DNA(n) + a 2'-deoxyribonucleoside 5'-triphosphate = DNA(n+1) + diphosphate. Inhibited by KCL. Also inhibited by carbonyldiphosphonate, aphidicolin and N-ethylmaleimide (NEM). In terms of biological role, as the catalytic component of the DNA polymerase delta complex, plays a crucial role in high fidelity genome replication, including lagging strand synthesis, DNA recombination and repair. Exhibits both DNA polymerase and 3'- to 5'-exonuclease activities. Required at the nucleus of rapidly dividing embryonic cells to activate genome replication during the earliest cell cycles. Likely to require the presence of accessory proteins PolD2 and PolD3 for full activity. This Drosophila melanogaster (Fruit fly) protein is DNA polymerase delta catalytic subunit.